The primary structure comprises 1053 residues: Integrin alpha-3 (1053 aa).

The first 32 residues, 1–32 (MGPGPCRVPRAPGWLLRALALMVAACGRVAFA), serve as a signal peptide directing secretion. The Extracellular segment spans residues 33–993 (FNLDTRFLVV…LVEELPAEIE (961 aa)). FG-GAP repeat units follow at residues 38–103 (RFLV…KDDC), 110–171 (EKSD…DLQL), 185–235 (CNSN…WDLS), 236–293 (EYSY…GGDL), 294–355 (QRKQ…ASFP), 357–412 (QPSL…GLLR), and 416–478 (QIIH…VARP). An N-linked (GlcNAc...) asparagine glycan is attached at N86. Cystine bridges form between C94–C103, C140–C162, and C185–C197. 2 disulfide bridges follow: C486–C491 and C497–C551. 4 N-linked (GlcNAc...) asparagine glycosylation sites follow: N501, N512, N574, and N606. C616 and C622 form a disulfide bridge. N-linked (GlcNAc...) asparagine glycosylation is found at N657, N699, N843, and N859. C695 and C704 are oxidised to a cystine. Intrachain disulfides connect C848/C906 and C913/C918. A disordered region spans residues 865 to 890 (PGVTPLSPQRRRRQLDPGGDQSSPPV). N925, N928, N937, and N971 each carry an N-linked (GlcNAc...) asparagine glycan. A helical transmembrane segment spans residues 994 to 1021 (LWLVLVAVGAGLLLLGLIILLLWKCGFF). C1018 is lipidated: S-palmitoyl cysteine. The Cytoplasmic segment spans residues 1022–1053 (KRARTRALYEAKRQKAEMKSQPSETERLTDDY).

The protein belongs to the integrin alpha chain family. As to quaternary structure, heterodimer of an alpha and a beta subunit. The alpha subunit is composed of a heavy and a light chain linked by a disulfide bond. Alpha-3 associates with beta-1. Interacts with HPS5. Interacts with FAP (seprase); the interaction occurs at the cell surface of invadopodia membrane in a collagen-dependent manner. As to expression, isoform 1 and isoform 2 are expressed in heart and brain. Only isoform 1 is detected in lung.

The protein resides in the cell membrane. It localises to the cell projection. Its subcellular location is the invadopodium membrane. It is found in the filopodium membrane. In terms of biological role, integrin alpha-3/beta-1 is a receptor for fibronectin, laminin, collagen, epiligrin, thrombospondin and CSPG4. Integrin alpha-3/beta-1 provides a docking site for FAP (seprase) at invadopodia plasma membranes in a collagen-dependent manner and hence may participate in the adhesion, formation of invadopodia and matrix degradation processes, promoting cell invasion. Alpha-3/beta-1 may mediate with LGALS3 the stimulation by CSPG4 of endothelial cells migration. This Mus musculus (Mouse) protein is Integrin alpha-3 (Itga3).